The chain runs to 304 residues: Porphobilinogen deaminase (304 aa).

An S-(dipyrrolylmethanemethyl)cysteine modification is found at Cys-240.

It belongs to the HMBS family. As to quaternary structure, monomer. It depends on dipyrromethane as a cofactor.

The catalysed reaction is 4 porphobilinogen + H2O = hydroxymethylbilane + 4 NH4(+). The protein operates within porphyrin-containing compound metabolism; protoporphyrin-IX biosynthesis; coproporphyrinogen-III from 5-aminolevulinate: step 2/4. Tetrapolymerization of the monopyrrole PBG into the hydroxymethylbilane pre-uroporphyrinogen in several discrete steps. This is Porphobilinogen deaminase from Xanthomonas oryzae pv. oryzae (strain KACC10331 / KXO85).